Consider the following 439-residue polypeptide: Adenylosuccinate synthetase (439 aa).

GTP-binding positions include 14-20 (GDEGKGK) and 42-44 (GHT). Asp15 serves as the catalytic Proton acceptor. Mg(2+) is bound by residues Asp15 and Gly42. Residues 15–18 (DEGK), 40–43 (NAGH), Thr130, Arg144, Gln225, Thr240, and Arg304 contribute to the IMP site. His43 functions as the Proton donor in the catalytic mechanism. 300 to 306 (TTTGRRR) lines the substrate pocket. GTP is bound by residues Arg306, 332 to 334 (KLD), and 414 to 416 (SLG).

It belongs to the adenylosuccinate synthetase family. As to quaternary structure, homodimer. The cofactor is Mg(2+).

It is found in the cytoplasm. It carries out the reaction IMP + L-aspartate + GTP = N(6)-(1,2-dicarboxyethyl)-AMP + GDP + phosphate + 2 H(+). It functions in the pathway purine metabolism; AMP biosynthesis via de novo pathway; AMP from IMP: step 1/2. Plays an important role in the de novo pathway of purine nucleotide biosynthesis. Catalyzes the first committed step in the biosynthesis of AMP from IMP. The polypeptide is Adenylosuccinate synthetase (Prochlorococcus marinus (strain MIT 9303)).